The chain runs to 96 residues: Putative pterin-4-alpha-carbinolamine dehydratase (96 aa).

Belongs to the pterin-4-alpha-carbinolamine dehydratase family.

It carries out the reaction (4aS,6R)-4a-hydroxy-L-erythro-5,6,7,8-tetrahydrobiopterin = (6R)-L-erythro-6,7-dihydrobiopterin + H2O. This is Putative pterin-4-alpha-carbinolamine dehydratase from Metallosphaera sedula (strain ATCC 51363 / DSM 5348 / JCM 9185 / NBRC 15509 / TH2).